Here is a 711-residue protein sequence, read N- to C-terminus: Polyribonucleotide nucleotidyltransferase (711 aa).

Aspartate 486 and aspartate 492 together coordinate Mg(2+). A KH domain is found at 553–612 (PRIHTIKINPDKIKDVIGKGGSVIRALTEETGTTIEIEDDGTVKIAATDGEKAKHAIRRI). The 69-residue stretch at 622-690 (GRVYTGKVTR…RQGRIRLSIK (69 aa)) folds into the S1 motif domain. Residues 689–711 (IKEATEQSQPAAAPEAPAAEQGE) are disordered. Positions 694 to 711 (EQSQPAAAPEAPAAEQGE) are enriched in low complexity.

It belongs to the polyribonucleotide nucleotidyltransferase family. Component of the RNA degradosome, which is a multiprotein complex involved in RNA processing and mRNA degradation. Mg(2+) is required as a cofactor.

The protein resides in the cytoplasm. It catalyses the reaction RNA(n+1) + phosphate = RNA(n) + a ribonucleoside 5'-diphosphate. Its function is as follows. Involved in mRNA degradation. Catalyzes the phosphorolysis of single-stranded polyribonucleotides processively in the 3'- to 5'-direction. This is Polyribonucleotide nucleotidyltransferase from Escherichia coli O8 (strain IAI1).